The following is a 412-amino-acid chain: Phosphoglycerate kinase (412 aa).

Substrate contacts are provided by residues 26–28 (DFN), Arg-42, 65–68 (HLGR), Arg-133, and Arg-166. ATP contacts are provided by residues Lys-217, Gly-308, Glu-339, and 368 to 371 (GGDS).

This sequence belongs to the phosphoglycerate kinase family. In terms of assembly, monomer.

The protein localises to the cytoplasm. The enzyme catalyses (2R)-3-phosphoglycerate + ATP = (2R)-3-phospho-glyceroyl phosphate + ADP. Its pathway is carbohydrate degradation; glycolysis; pyruvate from D-glyceraldehyde 3-phosphate: step 2/5. The protein is Phosphoglycerate kinase of Synechococcus sp. (strain JA-2-3B'a(2-13)) (Cyanobacteria bacterium Yellowstone B-Prime).